A 184-amino-acid chain; its full sequence is Peptidyl-tRNA hydrolase (184 aa).

Tyrosine 14 provides a ligand contact to tRNA. Residue histidine 19 is the Proton acceptor of the active site. TRNA contacts are provided by phenylalanine 60 and asparagine 62.

It belongs to the PTH family. As to quaternary structure, monomer.

The protein localises to the cytoplasm. It carries out the reaction an N-acyl-L-alpha-aminoacyl-tRNA + H2O = an N-acyl-L-amino acid + a tRNA + H(+). Functionally, hydrolyzes ribosome-free peptidyl-tRNAs (with 1 or more amino acids incorporated), which drop off the ribosome during protein synthesis, or as a result of ribosome stalling. In terms of biological role, catalyzes the release of premature peptidyl moieties from peptidyl-tRNA molecules trapped in stalled 50S ribosomal subunits, and thus maintains levels of free tRNAs and 50S ribosomes. In Mesomycoplasma hyopneumoniae (strain 232) (Mycoplasma hyopneumoniae), this protein is Peptidyl-tRNA hydrolase.